Consider the following 252-residue polypeptide: Triosephosphate isomerase (252 aa).

10–12 is a substrate binding site; sequence NWK. His96 (electrophile) is an active-site residue. Residue Glu168 is the Proton acceptor of the active site. Residues Gly174, Ser213, and 234-235 contribute to the substrate site; that span reads GG.

It belongs to the triosephosphate isomerase family. Homodimer.

It is found in the cytoplasm. The catalysed reaction is D-glyceraldehyde 3-phosphate = dihydroxyacetone phosphate. The protein operates within carbohydrate biosynthesis; gluconeogenesis. It functions in the pathway carbohydrate degradation; glycolysis; D-glyceraldehyde 3-phosphate from glycerone phosphate: step 1/1. Involved in the gluconeogenesis. Catalyzes stereospecifically the conversion of dihydroxyacetone phosphate (DHAP) to D-glyceraldehyde-3-phosphate (G3P). The protein is Triosephosphate isomerase of Nitrosomonas europaea (strain ATCC 19718 / CIP 103999 / KCTC 2705 / NBRC 14298).